The chain runs to 293 residues: Diaminopimelate epimerase (293 aa).

Substrate-binding residues include Asn17, Gln47, and Asn67. Cys76 (proton donor) is an active-site residue. Substrate contacts are provided by residues 77-78 (GN), Asn164, Asn197, and 215-216 (ER). Cys224 functions as the Proton acceptor in the catalytic mechanism. 225 to 226 (GS) contributes to the substrate binding site.

It belongs to the diaminopimelate epimerase family. In terms of assembly, homodimer.

The protein resides in the cytoplasm. The enzyme catalyses (2S,6S)-2,6-diaminopimelate = meso-2,6-diaminopimelate. It participates in amino-acid biosynthesis; L-lysine biosynthesis via DAP pathway; DL-2,6-diaminopimelate from LL-2,6-diaminopimelate: step 1/1. Catalyzes the stereoinversion of LL-2,6-diaminopimelate (L,L-DAP) to meso-diaminopimelate (meso-DAP), a precursor of L-lysine and an essential component of the bacterial peptidoglycan. This chain is Diaminopimelate epimerase, found in Rhodopseudomonas palustris (strain HaA2).